The chain runs to 77 residues: Translation initiation factor IF-1, chloroplastic (77 aa).

Residues 1 to 71 (MKRQKWIHEG…TRGRIIYRLR (71 aa)) enclose the S1-like domain.

This sequence belongs to the IF-1 family. Component of the 30S ribosomal translation pre-initiation complex which assembles on the 30S ribosome in the order IF-2 and IF-3, IF-1 and N-formylmethionyl-tRNA(fMet); mRNA recruitment can occur at any time during PIC assembly.

The protein localises to the plastid. Its subcellular location is the chloroplast. In terms of biological role, one of the essential components for the initiation of protein synthesis. Stabilizes the binding of IF-2 and IF-3 on the 30S subunit to which N-formylmethionyl-tRNA(fMet) subsequently binds. Helps modulate mRNA selection, yielding the 30S pre-initiation complex (PIC). Upon addition of the 50S ribosomal subunit IF-1, IF-2 and IF-3 are released leaving the mature 70S translation initiation complex. The polypeptide is Translation initiation factor IF-1, chloroplastic (Leucophyllum frutescens (Texas ranger)).